Consider the following 842-residue polypeptide: Glucans biosynthesis glucosyltransferase H (842 aa).

Helical transmembrane passes span 141-161 (LLLL…TILP), 194-214 (ILLL…TALM), 513-533 (VFLT…FLAL), 570-590 (LFAS…ILIW), 615-635 (VLLA…AFLG), and 680-700 (FLFW…VSVI).

Belongs to the glycosyltransferase 2 family. OpgH subfamily.

Its subcellular location is the cell inner membrane. It participates in glycan metabolism; osmoregulated periplasmic glucan (OPG) biosynthesis. Involved in the biosynthesis of osmoregulated periplasmic glucans (OPGs). The polypeptide is Glucans biosynthesis glucosyltransferase H (Enterobacter sp. (strain 638)).